The chain runs to 177 residues: Large ribosomal subunit protein uL6 (177 aa).

This sequence belongs to the universal ribosomal protein uL6 family. Part of the 50S ribosomal subunit.

Functionally, this protein binds to the 23S rRNA, and is important in its secondary structure. It is located near the subunit interface in the base of the L7/L12 stalk, and near the tRNA binding site of the peptidyltransferase center. This chain is Large ribosomal subunit protein uL6, found in Vibrio atlanticus (strain LGP32) (Vibrio splendidus (strain Mel32)).